Reading from the N-terminus, the 595-residue chain is Elongation factor 4 (595 aa).

One can recognise a tr-type G domain in the interval 2–184; it reads SHIRNFSIIA…RLVATIPPPT (183 aa). Residues 14 to 19 and 131 to 134 each bind GTP; these read DHGKST and NKMD.

This sequence belongs to the TRAFAC class translation factor GTPase superfamily. Classic translation factor GTPase family. LepA subfamily.

It is found in the cell inner membrane. The catalysed reaction is GTP + H2O = GDP + phosphate + H(+). In terms of biological role, required for accurate and efficient protein synthesis under certain stress conditions. May act as a fidelity factor of the translation reaction, by catalyzing a one-codon backward translocation of tRNAs on improperly translocated ribosomes. Back-translocation proceeds from a post-translocation (POST) complex to a pre-translocation (PRE) complex, thus giving elongation factor G a second chance to translocate the tRNAs correctly. Binds to ribosomes in a GTP-dependent manner. The protein is Elongation factor 4 of Pseudomonas syringae pv. tomato (strain ATCC BAA-871 / DC3000).